We begin with the raw amino-acid sequence, 92 residues long: Small ribosomal subunit protein uS19 (92 aa).

This sequence belongs to the universal ribosomal protein uS19 family.

In terms of biological role, protein S19 forms a complex with S13 that binds strongly to the 16S ribosomal RNA. In Polynucleobacter asymbioticus (strain DSM 18221 / CIP 109841 / QLW-P1DMWA-1) (Polynucleobacter necessarius subsp. asymbioticus), this protein is Small ribosomal subunit protein uS19.